A 142-amino-acid chain; its full sequence is Large ribosomal subunit protein uL11 (142 aa).

It belongs to the universal ribosomal protein uL11 family. In terms of assembly, part of the ribosomal stalk of the 50S ribosomal subunit. Interacts with L10 and the large rRNA to form the base of the stalk. L10 forms an elongated spine to which L12 dimers bind in a sequential fashion forming a multimeric L10(L12)X complex. In terms of processing, one or more lysine residues are methylated.

Its function is as follows. Forms part of the ribosomal stalk which helps the ribosome interact with GTP-bound translation factors. The protein is Large ribosomal subunit protein uL11 of Pectobacterium atrosepticum (strain SCRI 1043 / ATCC BAA-672) (Erwinia carotovora subsp. atroseptica).